The primary structure comprises 458 residues: MKATKGRNVVVVGTQWGDEGKGKLVDWLTESAQGVVRFQGGHNAGHTLVINGVKTALHLIPSGIMRPGVKCYIGNGVVLSAAKLFEEIEGLEKAGVQVRDRLRVSEACPLILPFHSALDVAREAAREQGGTEKIGTTGRGIGPAYEDKIARRALRVQDLKYPERFATKLRELLALHNHILVNVLGSKNFTFGDALKPYIKDGEVQFDAVYEEAMRHAELLKPMMADVSRELNAAHAEGANLLFEGAQGTLLDVDHGTYPYVTSSNCVAGNAAAGSGVGPGMLHYILGITKAYCTRVGGGPFPTELDWEKEGTPGWHMSTVGAEKGVTTGRSRRCGWFDAALLKRSAQVNGLSGLCITKLDVLDGLQELLLCVGYELDGEKIDLLPMGADEIARCKPIYESIPGWTDSTVGVTDYDKLPANARRYLERIEEVTGVPIAMVSTSPDRDHTILMQNPYAAQ.

Residues 17 to 23 (GDEGKGK) and 45 to 47 (GHT) each bind GTP. The active-site Proton acceptor is aspartate 18. The Mg(2+) site is built by aspartate 18 and glycine 45. IMP is bound by residues 18-21 (DEGK), 43-46 (NAGH), threonine 137, arginine 151, glutamine 247, threonine 262, and arginine 330. The active-site Proton donor is the histidine 46. A substrate-binding site is contributed by 326-332 (VTTGRSR). GTP contacts are provided by residues arginine 332, 358 to 360 (KLD), and 440 to 442 (STS).

It belongs to the adenylosuccinate synthetase family. As to quaternary structure, homodimer. The cofactor is Mg(2+).

It localises to the cytoplasm. The catalysed reaction is IMP + L-aspartate + GTP = N(6)-(1,2-dicarboxyethyl)-AMP + GDP + phosphate + 2 H(+). The protein operates within purine metabolism; AMP biosynthesis via de novo pathway; AMP from IMP: step 1/2. Plays an important role in the de novo pathway of purine nucleotide biosynthesis. Catalyzes the first committed step in the biosynthesis of AMP from IMP. This Delftia acidovorans (strain DSM 14801 / SPH-1) protein is Adenylosuccinate synthetase.